The following is a 116-amino-acid chain: SPbeta prophage-derived uncharacterized protein YoqA (116 aa).

The chain is SPbeta prophage-derived uncharacterized protein YoqA (yoqA) from Bacillus subtilis (strain 168).